Here is a 319-residue protein sequence, read N- to C-terminus: Protease HtpX homolog (319 aa).

2 consecutive transmembrane segments (helical) span residues 6 to 26 and 28 to 48; these read TAML…VIGG and GGMM…YWNS. His130 contributes to the Zn(2+) binding site. The active site involves Glu131. His134 contacts Zn(2+). 2 helical membrane passes run 145–165 and 172–192; these read MTAT…FFGG and PLGF…AALV. Zn(2+) is bound at residue Glu201. Positions 280-319 are disordered; the sequence is EMSTGSTAPVRPDNAVRKSRSVPRTGWGRGGSEPPKGPWS.

This sequence belongs to the peptidase M48B family. Requires Zn(2+) as cofactor.

The protein resides in the cell inner membrane. The sequence is that of Protease HtpX homolog from Sinorhizobium medicae (strain WSM419) (Ensifer medicae).